Consider the following 886-residue polypeptide: Valine--tRNA ligase (886 aa).

The 'HIGH' region motif lies at 53-63 (PNVTGSLHMGH). The 'KMSKS' region signature appears at 540–544 (KMSKS). Residue K543 participates in ATP binding. Positions 819–851 (TIDVAAERRRLEKELAGAQKELASTAAKLANAD) form a coiled coil.

It belongs to the class-I aminoacyl-tRNA synthetase family. ValS type 1 subfamily. Monomer.

The protein localises to the cytoplasm. It catalyses the reaction tRNA(Val) + L-valine + ATP = L-valyl-tRNA(Val) + AMP + diphosphate. Its function is as follows. Catalyzes the attachment of valine to tRNA(Val). As ValRS can inadvertently accommodate and process structurally similar amino acids such as threonine, to avoid such errors, it has a 'posttransfer' editing activity that hydrolyzes mischarged Thr-tRNA(Val) in a tRNA-dependent manner. This is Valine--tRNA ligase from Mycobacterium tuberculosis (strain CDC 1551 / Oshkosh).